A 328-amino-acid chain; its full sequence is Acyl-CoA wax alcohol acyltransferase 1 (328 aa).

Helical transmembrane passes span 12-32 (SLSL…VQPL) and 34-53 (ICLL…VWLL).

It belongs to the diacylglycerol acyltransferase family.

The protein resides in the endoplasmic reticulum membrane. The catalysed reaction is a long chain fatty alcohol + a fatty acyl-CoA = a wax ester + CoA. It carries out the reaction 1,2-di-(9Z-octadecenoyl)-sn-glycerol + (9Z)-octadecenoyl-CoA = 1,2,3-tri-(9Z-octadecenoyl)-glycerol + CoA. The enzyme catalyses hexadecan-1-ol + (9Z)-octadecenoyl-CoA = hexadecanyl (9Z)-octadecenoate + CoA. It catalyses the reaction decan-1-ol + (9Z)-octadecenoyl-CoA = 1-O-decyl-(9Z)-octadecenoate + CoA. The catalysed reaction is (9Z)-hexadecen-1-ol + (9Z)-octadecenoyl-CoA = 1-O-(9Z)-hexadecenyl (9Z)-octadecenoate + CoA. It carries out the reaction octadecan-1-ol + (9Z)-octadecenoyl-CoA = 1-O-octadecyl (9Z)-octadecenoate + CoA. The enzyme catalyses (9Z)-octadecen-1-ol + (9Z)-octadecenoyl-CoA = 1-O-(9Z)-octadecenyl (9Z)-octadecenoate + CoA. It catalyses the reaction hexadecan-1-ol + hexadecanoyl-CoA = hexadecanyl hexadecanoate + CoA. The catalysed reaction is hexadecan-1-ol + (9Z)-hexadecenoyl-CoA = 1-O-hexadecyl (9Z)-hexadecenoate + CoA. It carries out the reaction hexadecan-1-ol + octadecanoyl-CoA = hexadecanyl octadecanoate + CoA. The enzyme catalyses eicosan-1-ol + (9Z)-octadecenoyl-CoA = 1-O-eicosanyl (9Z)-octadecenoate + CoA. In terms of biological role, acyltransferase that catalyzes the formation of ester bonds between fatty alcohols and fatty acyl-CoAs to form wax monoesters. Shows a strong preference for decyl alcohol (C10), with less activity towards C16 and C18 alcohols. Shows a strong preference for saturated acyl-CoAs. This Mus musculus (Mouse) protein is Acyl-CoA wax alcohol acyltransferase 1 (Awat1).